The primary structure comprises 191 residues: Orotate phosphoribosyltransferase (191 aa).

Residue 114–122 coordinates 5-phospho-alpha-D-ribose 1-diphosphate; that stretch reads EDVVTTGKS. Orotate contacts are provided by Thr118 and Arg146.

This sequence belongs to the purine/pyrimidine phosphoribosyltransferase family. PyrE subfamily. Homodimer. Requires Mg(2+) as cofactor.

The enzyme catalyses orotidine 5'-phosphate + diphosphate = orotate + 5-phospho-alpha-D-ribose 1-diphosphate. It participates in pyrimidine metabolism; UMP biosynthesis via de novo pathway; UMP from orotate: step 1/2. Its function is as follows. Catalyzes the transfer of a ribosyl phosphate group from 5-phosphoribose 1-diphosphate to orotate, leading to the formation of orotidine monophosphate (OMP). In Clostridium botulinum (strain Loch Maree / Type A3), this protein is Orotate phosphoribosyltransferase.